We begin with the raw amino-acid sequence, 476 residues long: ATP synthase subunit beta (476 aa).

154-161 (GGAGVGKT) is a binding site for ATP.

This sequence belongs to the ATPase alpha/beta chains family. As to quaternary structure, F-type ATPases have 2 components, CF(1) - the catalytic core - and CF(0) - the membrane proton channel. CF(1) has five subunits: alpha(3), beta(3), gamma(1), delta(1), epsilon(1). CF(0) has four main subunits: a(1), b(1), b'(1) and c(9-12).

Its subcellular location is the cell inner membrane. The enzyme catalyses ATP + H2O + 4 H(+)(in) = ADP + phosphate + 5 H(+)(out). Its function is as follows. Produces ATP from ADP in the presence of a proton gradient across the membrane. The catalytic sites are hosted primarily by the beta subunits. This chain is ATP synthase subunit beta, found in Rhodopseudomonas palustris (strain BisA53).